The primary structure comprises 225 residues: Small ribosomal subunit protein uS3 (225 aa).

A KH type-2 domain is found at 38-106 (IRKFVQNRFN…PVNLNIIEVK (69 aa)).

The protein belongs to the universal ribosomal protein uS3 family. In terms of assembly, part of the 30S ribosomal subunit. Forms a tight complex with proteins S10 and S14.

Functionally, binds the lower part of the 30S subunit head. Binds mRNA in the 70S ribosome, positioning it for translation. This Leptospira interrogans serogroup Icterohaemorrhagiae serovar copenhageni (strain Fiocruz L1-130) protein is Small ribosomal subunit protein uS3.